Consider the following 419-residue polypeptide: Argininosuccinate synthase (419 aa).

Residues 9–17 (AYSGGLDTS) and A35 each bind ATP. Residues Y86 and S91 each coordinate L-citrulline. Residue 114-122 (AHGATGKGN) participates in ATP binding. Positions 118, 122, and 123 each coordinate L-aspartate. N122 provides a ligand contact to L-citrulline. L-citrulline contacts are provided by R126, S179, S188, E270, and Y282.

The protein belongs to the argininosuccinate synthase family. Type 1 subfamily. As to quaternary structure, homotetramer.

The enzyme catalyses L-citrulline + L-aspartate + ATP = 2-(N(omega)-L-arginino)succinate + AMP + diphosphate + H(+). It participates in amino-acid biosynthesis; L-arginine biosynthesis; L-arginine from L-ornithine and carbamoyl phosphate: step 2/3. Its pathway is nitrogen metabolism; urea cycle; (N(omega)-L-arginino)succinate from L-aspartate and L-citrulline: step 1/1. The polypeptide is Argininosuccinate synthase (Drosophila melanogaster (Fruit fly)).